A 250-amino-acid polypeptide reads, in one-letter code: 2,5-dichloro-2,5-cyclohexadiene-1,4-diol dehydrogenase (250 aa).

NAD(+) is bound at residue 9-34 (IIVTGGGSGIGRATVELLVASGANVA). Serine 141 contacts substrate. Catalysis depends on tyrosine 154, which acts as the Proton acceptor.

It belongs to the short-chain dehydrogenases/reductases (SDR) family.

The catalysed reaction is 2,5-dichlorocyclohexa-2,5-dien-1,4-diol + NAD(+) = 2,5-dichlorohydroquinone + NADH + H(+). The protein operates within xenobiotic degradation; gamma-hexachlorocyclohexane degradation. Its function is as follows. Catalyzes the dehydrogenation of 2,5-dichloro-2,5-cyclohexadiene-1,4-diol (2,5-DDOL) to 2,5-dichlorohydroquinone (2,5-DCHQ), a step in the degradation of gamma-hexachlorocyclohexane (gamma-HCH or lindane). The sequence is that of 2,5-dichloro-2,5-cyclohexadiene-1,4-diol dehydrogenase from Sphingobium indicum (strain DSM 16412 / CCM 7286 / MTCC 6364 / B90A).